The primary structure comprises 29 residues: Protein YldA (29 aa).

Residues 5–25 (FYILIGFLIMAAIIVMAVLYL) form a helical membrane-spanning segment.

The protein resides in the cell inner membrane. This chain is Protein YldA, found in Escherichia coli (strain K12).